The sequence spans 432 residues: UPF0761 membrane protein Cag_0935 (432 aa).

6 consecutive transmembrane segments (helical) span residues 52–72, 108–128, 148–168, 190–210, 220–240, and 254–274; these read LLSI…FEVF, NIPL…LSTV, FTLY…SLAA, LLAL…YMLV, AFAG…WFLF, and ALSV…VVLV.

This sequence belongs to the UPF0761 family.

The protein localises to the cell inner membrane. In Chlorobium chlorochromatii (strain CaD3), this protein is UPF0761 membrane protein Cag_0935.